The following is a 30-amino-acid chain: Trypsin inhibitor 3 (30 aa).

Gln1 is subject to Pyrrolidone carboxylic acid. Cystine bridges form between Cys4–Cys21, Cys11–Cys23, and Cys17–Cys29.

The protein localises to the secreted. Its function is as follows. Inhibits trypsin; probably participates in a plant defense mechanism. The polypeptide is Trypsin inhibitor 3 (Momordica cochinchinensis (Spiny bitter cucumber)).